Consider the following 1413-residue polypeptide: DNA-directed RNA polymerase subunit beta' (1413 aa).

Zn(2+) is bound by residues Cys70, Cys72, Cys85, and Cys88. Positions 460, 462, and 464 each coordinate Mg(2+). Residues Cys819, Cys893, Cys900, and Cys903 each coordinate Zn(2+).

The protein belongs to the RNA polymerase beta' chain family. The RNAP catalytic core consists of 2 alpha, 1 beta, 1 beta' and 1 omega subunit. When a sigma factor is associated with the core the holoenzyme is formed, which can initiate transcription. Mg(2+) serves as cofactor. Zn(2+) is required as a cofactor.

It catalyses the reaction RNA(n) + a ribonucleoside 5'-triphosphate = RNA(n+1) + diphosphate. Its function is as follows. DNA-dependent RNA polymerase catalyzes the transcription of DNA into RNA using the four ribonucleoside triphosphates as substrates. This chain is DNA-directed RNA polymerase subunit beta', found in Burkholderia vietnamiensis (strain G4 / LMG 22486) (Burkholderia cepacia (strain R1808)).